A 345-amino-acid chain; its full sequence is Tyrosine--tRNA ligase (345 aa).

Position 36 (tyrosine 36) interacts with L-tyrosine. Positions 41-49 (PTGEMHIGH) match the 'HIGH' region motif. Residues tyrosine 163, glutamine 167, aspartate 170, and glutamine 185 each coordinate L-tyrosine.

Belongs to the class-I aminoacyl-tRNA synthetase family. TyrS type 3 subfamily. Homodimer.

The protein resides in the cytoplasm. The enzyme catalyses tRNA(Tyr) + L-tyrosine + ATP = L-tyrosyl-tRNA(Tyr) + AMP + diphosphate + H(+). Catalyzes the attachment of tyrosine to tRNA(Tyr) in a two-step reaction: tyrosine is first activated by ATP to form Tyr-AMP and then transferred to the acceptor end of tRNA(Tyr). This is Tyrosine--tRNA ligase from Natronomonas pharaonis (strain ATCC 35678 / DSM 2160 / CIP 103997 / JCM 8858 / NBRC 14720 / NCIMB 2260 / Gabara) (Halobacterium pharaonis).